Reading from the N-terminus, the 292-residue chain is UTP--glucose-1-phosphate uridylyltransferase (292 aa).

This sequence belongs to the UDPGP type 2 family. As to quaternary structure, interacts with FloT.

The protein resides in the cell membrane. Its subcellular location is the membrane raft. The enzyme catalyses alpha-D-glucose 1-phosphate + UTP + H(+) = UDP-alpha-D-glucose + diphosphate. It participates in glycolipid metabolism; diglucosyl-diacylglycerol biosynthesis. In terms of biological role, catalyzes the formation of UDP-glucose from glucose-1-phosphate and UTP. This is an intermediate step in the biosynthesis of diglucosyl-diacylglycerol (Glc2-DAG), i.e. the predominant glycolipid found in B.subtilis membrane, which is also used as a membrane anchor for lipoteichoic acid (LTA). Has a role in the biosynthesis of all phosphate-containing envelope polymers, since UDP-glucose serves as a glucosyl donor not only for the biosynthesis of LTA but also for wall teichoic acids (WTAs). Is required for biofilm formation. This is likely due to another role of UDP-glucose, which might also act as a metabolic signal regulating biofilm formation or may be involved in some unknown biosynthetic pathway essential for biofilm formation, e.g. the synthesis of an exopolysaccharide. The chain is UTP--glucose-1-phosphate uridylyltransferase (gtaB) from Bacillus subtilis (strain 168).